Consider the following 272-residue polypeptide: Putative phosphoenolpyruvate synthase regulatory protein (272 aa).

Position 151 to 158 (151 to 158 (GVSRSGKT)) interacts with ADP.

The protein belongs to the pyruvate, phosphate/water dikinase regulatory protein family. PSRP subfamily.

The catalysed reaction is [pyruvate, water dikinase] + ADP = [pyruvate, water dikinase]-phosphate + AMP + H(+). The enzyme catalyses [pyruvate, water dikinase]-phosphate + phosphate + H(+) = [pyruvate, water dikinase] + diphosphate. Its function is as follows. Bifunctional serine/threonine kinase and phosphorylase involved in the regulation of the phosphoenolpyruvate synthase (PEPS) by catalyzing its phosphorylation/dephosphorylation. The chain is Putative phosphoenolpyruvate synthase regulatory protein from Desulfotalea psychrophila (strain LSv54 / DSM 12343).